A 341-amino-acid chain; its full sequence is MPSVSDTDTSLRFPILIGDIGGTNARFSIVLDANSEPTEPQIVQTANFNTIDEAIQAAVLDRSSVRPNSAVLAVAGPVDGDEIELTNCPWVVKPRQMFANLGLSDIVVLNDFEAQALAVVALGEEHMEKIGGGTPEPNAGRVVLGPGTGLGVAGLVYALRHWIPVPGEGGHMDIGPRTPRDFEVFPHIEKLEGRISGEQILCGRGLVNVYRAVAKADGKPAPFTTPAEITGAALAKTDPVAEEALETFVTCLGRTAGDLALVFMSRGGVFLTGGIAQKIVPALKEGNFRAAFEDKAPHSALMRTMPVYVITHPLAALLGLAAYARNPSLFGVQTAGRRWQA.

18–23 (GDIGGT) provides a ligand contact to ATP.

Belongs to the bacterial glucokinase family.

It localises to the cytoplasm. The enzyme catalyses D-glucose + ATP = D-glucose 6-phosphate + ADP + H(+). The chain is Glucokinase from Mesorhizobium japonicum (strain LMG 29417 / CECT 9101 / MAFF 303099) (Mesorhizobium loti (strain MAFF 303099)).